We begin with the raw amino-acid sequence, 682 residues long: Zinc finger protein 16 (682 aa).

Composition is skewed to basic and acidic residues over residues 1–10 and 113–125; these read MPSLRTRREE and VSER…EGRR. 2 disordered regions span residues 1–33 and 112–134; these read MPSL…HVSD and DVSE…SQEG. A necessary for transcription activation region spans residues 62-210; the sequence is YQQPDCDTRT…GVPTAESPLI (149 aa). A C2H2-type 1; degenerate zinc finger spans residues 209 to 231; it reads LICNECGKTFQGNPDLIQCQIVH. A C2H2-type 2; degenerate zinc finger spans residues 237 to 259; it reads FMCDDCGKTFSQNSVLKNHHRSH. Lysine 253 is covalently cross-linked (Glycyl lysine isopeptide (Lys-Gly) (interchain with G-Cter in SUMO2)). 8 consecutive C2H2-type zinc fingers follow at residues 265-287, 293-315, 321-343, 349-371, 377-399, 405-427, 433-455, and 461-483; these read YQCS…QSHH, YMCN…QKSH, YECN…QRIH, YVCS…HRTH, FECG…QRVH, YECN…HRVH, YKCS…RRIH, and HVCN…QIIH. 2 required for nuclear localization regions span residues 268-393 and 341-373; these read SECG…AHLR and RIHS…THTG. Residues 473–503 are required for nuclear localization; the sequence is SSVLRKHQIIHTGEKPYRCSVCGKAFSHSSA. At lysine 487 the chain carries N6-acetyllysine. 7 consecutive C2H2-type zinc fingers follow at residues 489-511, 517-539, 545-567, 573-595, 601-623, 629-651, and 657-679; these read YRCS…QGVH, YACH…QRVH, YECT…QRIH, HECN…QKVH, YTCV…QIIH, YKCS…QRIH, and YDCA…QLIH.

Belongs to the krueppel C2H2-type zinc-finger protein family. In terms of assembly, interacts with INCA1; the interaction inhibits INCA1 activity and induces the cell cycle process.

The protein resides in the nucleus. Acts as a transcriptional activator. Promotes cell proliferation by facilitating the cell cycle phase transition from the S to G2/M phase. Involved in both the hemin- and phorbol myristate acetate (PMA)-induced erythroid and megakaryocytic differentiation, respectively. Also plays a role as an inhibitor of cell apoptosis. The sequence is that of Zinc finger protein 16 (ZNF16) from Gorilla gorilla gorilla (Western lowland gorilla).